The primary structure comprises 131 residues: Fimbrial assembly protein, serogroups C1 and C2 (131 aa).

This is Fimbrial assembly protein, serogroups C1 and C2 (fimB) from Dichelobacter nodosus (Bacteroides nodosus).